A 216-amino-acid chain; its full sequence is Probable transaldolase (216 aa).

Lys-83 acts as the Schiff-base intermediate with substrate in catalysis.

Belongs to the transaldolase family. Type 3B subfamily.

The protein localises to the cytoplasm. It carries out the reaction D-sedoheptulose 7-phosphate + D-glyceraldehyde 3-phosphate = D-erythrose 4-phosphate + beta-D-fructose 6-phosphate. It functions in the pathway carbohydrate degradation; pentose phosphate pathway; D-glyceraldehyde 3-phosphate and beta-D-fructose 6-phosphate from D-ribose 5-phosphate and D-xylulose 5-phosphate (non-oxidative stage): step 2/3. Functionally, transaldolase is important for the balance of metabolites in the pentose-phosphate pathway. The polypeptide is Probable transaldolase (Thermoanaerobacter sp. (strain X514)).